The chain runs to 433 residues: Protein translocase subunit SecY (433 aa).

Transmembrane regions (helical) follow at residues 17–37, 71–91, 117–137, 141–161, 184–204, 212–232, 268–288, 310–330, 366–386, and 388–408; these read IVFTILILIVCRFGSFIPIPG, IFALAIMPYITASIIIQLMSV, LTVLLASFQAYGVAISLESIV, GPVVILAGFFFRVTTVITLVV, LIIFIGIISGVPSAIISMFEL, PLIALAVCIGVVVLIAIIIFF, GVIPPIFASSILLFPATLANF, YILLYVALIMFFSFFYTAIVF, LTVIGGIYLSVICVIPELLMN, and YVISLSLGGTSFLIVVNVVLD.

This sequence belongs to the SecY/SEC61-alpha family. As to quaternary structure, component of the Sec protein translocase complex. Heterotrimer consisting of SecY, SecE and SecG subunits. The heterotrimers can form oligomers, although 1 heterotrimer is thought to be able to translocate proteins. Interacts with the ribosome. Interacts with SecDF, and other proteins may be involved. Interacts with SecA.

It localises to the cell inner membrane. Its function is as follows. The central subunit of the protein translocation channel SecYEG. Consists of two halves formed by TMs 1-5 and 6-10. These two domains form a lateral gate at the front which open onto the bilayer between TMs 2 and 7, and are clamped together by SecE at the back. The channel is closed by both a pore ring composed of hydrophobic SecY resides and a short helix (helix 2A) on the extracellular side of the membrane which forms a plug. The plug probably moves laterally to allow the channel to open. The ring and the pore may move independently. This chain is Protein translocase subunit SecY, found in Rickettsia felis (strain ATCC VR-1525 / URRWXCal2) (Rickettsia azadi).